We begin with the raw amino-acid sequence, 557 residues long: Multidrug transporter FLR1 (557 aa).

3 N-linked (GlcNAc...) asparagine glycosylation sites follow: Asn33, Asn48, and Asn106. Residues 44 to 57 (SESSNMSFNSGSEE) show a composition bias toward low complexity. Residues 44 to 67 (SESSNMSFNSGSEENSQEKSVEDL) are disordered. 8 helical membrane passes run 113–133 (ALII…SSIY), 149–169 (VVGT…PIVF), 181–201 (LPVY…CALA), 204–224 (FAGL…ALST), 238–258 (LALV…LAPL), 271–291 (WIFW…TFFF), 355–375 (LYIA…PIVF), and 387–407 (GLAY…LLVF). Asn418 carries an N-linked (GlcNAc...) asparagine glycan. The next 4 membrane-spanning stretches (helical) occupy residues 426–446 (TLIL…MFGW), 450–470 (VHWI…FNIF), 484–506 (YVAS…FPLF), and 521–541 (VAWG…IPFV).

The protein belongs to the major facilitator superfamily.

It localises to the cell membrane. Its function is as follows. Multidrug transporter that confers resistance to 5-flucytosine (5-FC) and clotrimazole. Also confers resistance to benomyl, but not 4-nitroquinoline-N-oxide, cycloheximide, or fluconazole. Plays direct roles in extrusion of 5-flucytosine and clotrimazole. This chain is Multidrug transporter FLR1, found in Candida glabrata (strain ATCC 2001 / BCRC 20586 / JCM 3761 / NBRC 0622 / NRRL Y-65 / CBS 138) (Yeast).